The primary structure comprises 127 residues: MAYGVKIAKGDAYKRAAIKRRHIRIRKHISGTAERPRLVVTRSNRHIVAQVIDDVKGHTLASASTLDTTIRGGESDKSAQAKSVGALVAERAKAAGVEAVVFDRGGNQYAGRIAALADAAREAGLKF.

It belongs to the universal ribosomal protein uL18 family. Part of the 50S ribosomal subunit; part of the 5S rRNA/L5/L18/L25 subcomplex. Contacts the 5S and 23S rRNAs.

Functionally, this is one of the proteins that bind and probably mediate the attachment of the 5S RNA into the large ribosomal subunit, where it forms part of the central protuberance. This chain is Large ribosomal subunit protein uL18, found in Streptomyces avermitilis (strain ATCC 31267 / DSM 46492 / JCM 5070 / NBRC 14893 / NCIMB 12804 / NRRL 8165 / MA-4680).